Reading from the N-terminus, the 424-residue chain is Protein arginine N-methyltransferase 2 (424 aa).

2 disordered regions span residues 67–89 (DEAQ…EQKS) and 151–212 (YEPL…SSRY). The segment covering 71 to 89 (TETNGVNGETSSASTEQKS) has biased composition (polar residues). Low complexity-rich tracts occupy residues 163–173 (TGQGEDAANEP) and 187–201 (ETTA…ASTE). The region spanning 205–424 (PDVTSSRYLD…YRLPLCKFMD (220 aa)) is the RMT2 domain. Residues Tyr-212, Met-241, 261–266 (HGMGIV), 282–284 (EAH), 309–310 (WQ), and Asp-329 each bind S-adenosyl-L-methionine.

It belongs to the class I-like SAM-binding methyltransferase superfamily. RMT2 methyltransferase family. In terms of assembly, monomer.

It localises to the cytoplasm. The protein localises to the nucleus. S-adenosyl-L-methionine-dependent protein-arginine N-methyltransferase that methylates the delta-nitrogen atom of arginine residues to form N5-methylarginine (type IV) in target proteins. Monomethylates ribosomal protein L12. The chain is Protein arginine N-methyltransferase 2 from Aspergillus fumigatus (strain ATCC MYA-4609 / CBS 101355 / FGSC A1100 / Af293) (Neosartorya fumigata).